Here is a 164-residue protein sequence, read N- to C-terminus: 3-isopropylmalate dehydratase small subunit 1 (164 aa).

It belongs to the LeuD family. LeuD type 2 subfamily. As to quaternary structure, heterodimer of LeuC and LeuD.

It carries out the reaction (2R,3S)-3-isopropylmalate = (2S)-2-isopropylmalate. The protein operates within amino-acid biosynthesis; L-leucine biosynthesis; L-leucine from 3-methyl-2-oxobutanoate: step 2/4. In terms of biological role, catalyzes the isomerization between 2-isopropylmalate and 3-isopropylmalate, via the formation of 2-isopropylmaleate. In Pyrococcus abyssi (strain GE5 / Orsay), this protein is 3-isopropylmalate dehydratase small subunit 1 (leuD1).